We begin with the raw amino-acid sequence, 350 residues long: Nicotinate-nucleotide--dimethylbenzimidazole phosphoribosyltransferase (350 aa).

E317 (proton acceptor) is an active-site residue.

The protein belongs to the CobT family.

The enzyme catalyses 5,6-dimethylbenzimidazole + nicotinate beta-D-ribonucleotide = alpha-ribazole 5'-phosphate + nicotinate + H(+). The protein operates within nucleoside biosynthesis; alpha-ribazole biosynthesis; alpha-ribazole from 5,6-dimethylbenzimidazole: step 1/2. Catalyzes the synthesis of alpha-ribazole-5'-phosphate from nicotinate mononucleotide (NAMN) and 5,6-dimethylbenzimidazole (DMB). The polypeptide is Nicotinate-nucleotide--dimethylbenzimidazole phosphoribosyltransferase (Shewanella sp. (strain W3-18-1)).